The primary structure comprises 436 residues: Arginine biosynthesis bifunctional protein ArgJ, mitochondrial (436 aa).

The substrate site is built by Thr172, Lys198, Thr209, Glu298, Asn431, and Ser436. The Nucleophile role is filled by Thr209.

This sequence belongs to the ArgJ family. Heterodimer of an alpha and a beta chain. Post-translationally, the alpha and beta chains are autoproteolytically processed from a single precursor protein within the mitochondrion.

The protein resides in the mitochondrion matrix. It carries out the reaction N(2)-acetyl-L-ornithine + L-glutamate = N-acetyl-L-glutamate + L-ornithine. The catalysed reaction is L-glutamate + acetyl-CoA = N-acetyl-L-glutamate + CoA + H(+). It participates in amino-acid biosynthesis; L-arginine biosynthesis; L-ornithine and N-acetyl-L-glutamate from L-glutamate and N(2)-acetyl-L-ornithine (cyclic): step 1/1. It functions in the pathway amino-acid biosynthesis; L-arginine biosynthesis; N(2)-acetyl-L-ornithine from L-glutamate: step 1/4. In terms of biological role, catalyzes two activities which are involved in the cyclic version of arginine biosynthesis: the synthesis of acetylglutamate from glutamate and acetyl-CoA, and of ornithine by transacetylation between acetylornithine and glutamate. This Meyerozyma guilliermondii (strain ATCC 6260 / CBS 566 / DSM 6381 / JCM 1539 / NBRC 10279 / NRRL Y-324) (Yeast) protein is Arginine biosynthesis bifunctional protein ArgJ, mitochondrial.